Consider the following 407-residue polypeptide: Schlafen-like protein 1 (407 aa).

Disordered regions lie at residues 1-28 and 137-191; these read MTPM…LPEL and AQGP…CQGR. Residues 155–167 show a composition bias toward low complexity; it reads GLSPGPSPGSGVP. The span at 181–190 shows a compositional bias: polar residues; sequence QAQQLQSCQG. 261–268 provides a ligand contact to ATP; that stretch reads GVEDSGLV. Positions 366–398 form a coiled coil; sequence RQRWLVELGKLEEKMKALMMEKEQLQQQLQQHG.

Belongs to the Schlafen family. Subgroup I subfamily.

In Homo sapiens (Human), this protein is Schlafen-like protein 1 (SLFNL1).